We begin with the raw amino-acid sequence, 573 residues long: Dihydroxy-acid dehydratase (573 aa).

Residue cysteine 62 participates in [2Fe-2S] cluster binding. Aspartate 94 is a Mg(2+) binding site. Cysteine 135 is a [2Fe-2S] cluster binding site. Mg(2+)-binding residues include aspartate 136 and lysine 137. Position 137 is an N6-carboxylysine (lysine 137). Residue cysteine 212 participates in [2Fe-2S] cluster binding. Glutamate 463 contacts Mg(2+). The active-site Proton acceptor is the serine 489.

It belongs to the IlvD/Edd family. As to quaternary structure, homodimer. The cofactor is [2Fe-2S] cluster. Mg(2+) is required as a cofactor.

It carries out the reaction (2R)-2,3-dihydroxy-3-methylbutanoate = 3-methyl-2-oxobutanoate + H2O. The enzyme catalyses (2R,3R)-2,3-dihydroxy-3-methylpentanoate = (S)-3-methyl-2-oxopentanoate + H2O. It functions in the pathway amino-acid biosynthesis; L-isoleucine biosynthesis; L-isoleucine from 2-oxobutanoate: step 3/4. The protein operates within amino-acid biosynthesis; L-valine biosynthesis; L-valine from pyruvate: step 3/4. Functions in the biosynthesis of branched-chain amino acids. Catalyzes the dehydration of (2R,3R)-2,3-dihydroxy-3-methylpentanoate (2,3-dihydroxy-3-methylvalerate) into 2-oxo-3-methylpentanoate (2-oxo-3-methylvalerate) and of (2R)-2,3-dihydroxy-3-methylbutanoate (2,3-dihydroxyisovalerate) into 2-oxo-3-methylbutanoate (2-oxoisovalerate), the penultimate precursor to L-isoleucine and L-valine, respectively. The chain is Dihydroxy-acid dehydratase from Arthrobacter sp. (strain FB24).